We begin with the raw amino-acid sequence, 434 residues long: Enolase (434 aa).

Residue glutamine 163 participates in (2R)-2-phosphoglycerate binding. Glutamate 205 (proton donor) is an active-site residue. The Mg(2+) site is built by aspartate 242, glutamate 291, and aspartate 318. (2R)-2-phosphoglycerate-binding residues include lysine 343, arginine 372, serine 373, and lysine 394. The active-site Proton acceptor is the lysine 343.

It belongs to the enolase family. The cofactor is Mg(2+).

The protein localises to the cytoplasm. It is found in the secreted. It localises to the cell surface. Its subcellular location is the cell wall. The catalysed reaction is (2R)-2-phosphoglycerate = phosphoenolpyruvate + H2O. It participates in carbohydrate degradation; glycolysis; pyruvate from D-glyceraldehyde 3-phosphate: step 4/5. Functionally, catalyzes the reversible conversion of 2-phosphoglycerate (2-PG) into phosphoenolpyruvate (PEP). It is essential for the degradation of carbohydrates via glycolysis. This Streptococcus pneumoniae serotype 2 (strain D39 / NCTC 7466) protein is Enolase.